A 266-amino-acid polypeptide reads, in one-letter code: Ubiquinone biosynthesis protein COQ4 homolog, mitochondrial (266 aa).

Zn(2+)-binding residues include H169, D170, H173, and E185.

The protein belongs to the COQ4 family. As to quaternary structure, component of a multi-subunit COQ enzyme complex. Zn(2+) is required as a cofactor.

The protein localises to the mitochondrion inner membrane. The enzyme catalyses a 4-hydroxy-3-methoxy-5-(all-trans-polyprenyl)benzoate + H(+) = a 2-methoxy-6-(all-trans-polyprenyl)phenol + CO2. It functions in the pathway cofactor biosynthesis; ubiquinone biosynthesis. Its function is as follows. Lyase that catalyzes the C1-decarboxylation of 4-hydroxy-3-methoxy-5-(all-trans-polyprenyl)benzoic acid into 2-methoxy-6-(all-trans-polyprenyl)phenol during ubiquinone biosynthesis. The chain is Ubiquinone biosynthesis protein COQ4 homolog, mitochondrial from Drosophila ananassae (Fruit fly).